We begin with the raw amino-acid sequence, 396 residues long: Ribosomal RNA large subunit methyltransferase I (396 aa).

The 80-residue stretch at 2–81 (SVRLVLAKGR…ESIDIAFFTR (80 aa)) folds into the PUA domain.

The protein belongs to the methyltransferase superfamily. RlmI family.

It is found in the cytoplasm. It carries out the reaction cytidine(1962) in 23S rRNA + S-adenosyl-L-methionine = 5-methylcytidine(1962) in 23S rRNA + S-adenosyl-L-homocysteine + H(+). Specifically methylates the cytosine at position 1962 (m5C1962) of 23S rRNA. The chain is Ribosomal RNA large subunit methyltransferase I from Escherichia coli (strain UTI89 / UPEC).